A 449-amino-acid polypeptide reads, in one-letter code: 23S rRNA (uracil(1939)-C(5))-methyltransferase RlmD (449 aa).

The region spanning 1–66 is the TRAM domain; it reads MGRSRHHNKL…AKFDEAKVVE (66 aa). C79, C85, C88, and C169 together coordinate [4Fe-4S] cluster. S-adenosyl-L-methionine is bound by residues Q280, F309, N314, E330, N357, and D379. C405 acts as the Nucleophile in catalysis.

It belongs to the class I-like SAM-binding methyltransferase superfamily. RNA M5U methyltransferase family. RlmD subfamily.

The catalysed reaction is uridine(1939) in 23S rRNA + S-adenosyl-L-methionine = 5-methyluridine(1939) in 23S rRNA + S-adenosyl-L-homocysteine + H(+). Catalyzes the formation of 5-methyl-uridine at position 1939 (m5U1939) in 23S rRNA. This is 23S rRNA (uracil(1939)-C(5))-methyltransferase RlmD from Francisella tularensis subsp. novicida (strain U112).